The following is a 388-amino-acid chain: Processive diacylglycerol beta-glucosyltransferase (388 aa).

Belongs to the glycosyltransferase 28 family. UgtP subfamily.

It is found in the cell membrane. The catalysed reaction is a 1,2-diacyl-3-O-(beta-D-glucopyranosyl)-sn-glycerol + UDP-alpha-D-glucose = a 1,2-diacyl-3-O-(beta-D-Glc-(1-&gt;6)-beta-D-Glc)-sn-glycerol + UDP + H(+). The enzyme catalyses a 1,2-diacyl-3-O-(beta-D-Glc-(1-&gt;6)-beta-D-Glc)-sn-glycerol + UDP-alpha-D-glucose = a 1,2-diacyl-3-O-(beta-D-Glc-(1-&gt;6)-beta-D-Glc-(1-&gt;6)-beta-D-Glc)-sn-glycerol + UDP + H(+). It catalyses the reaction a 1,2-diacyl-sn-glycerol + UDP-alpha-D-glucose = a 1,2-diacyl-3-O-(beta-D-glucopyranosyl)-sn-glycerol + UDP + H(+). The protein operates within glycolipid metabolism; diglucosyl-diacylglycerol biosynthesis. Its function is as follows. Processive glucosyltransferase involved in the biosynthesis of both the bilayer- and non-bilayer-forming membrane glucolipids. Is able to successively transfer up to three glucosyl residues to diacylglycerol (DAG), thereby catalyzing the formation of beta-monoglucosyl-DAG (3-O-(beta-D-glucopyranosyl)-1,2-diacyl-sn-glycerol), beta-diglucosyl-DAG (3-O-(beta-D-glucopyranosyl-beta-(1-&gt;6)-D-glucopyranosyl)-1,2-diacyl-sn-glycerol) and beta-triglucosyl-DAG (3-O-(beta-D-glucopyranosyl-beta-(1-&gt;6)-D-glucopyranosyl-beta-(1-&gt;6)-D-glucopyranosyl)-1,2-diacyl-sn-glycerol). Beta-diglucosyl-DAG is the predominant glycolipid found in Bacillales and is also used as a membrane anchor for lipoteichoic acid (LTA). The chain is Processive diacylglycerol beta-glucosyltransferase from Bacillus cereus (strain B4264).